A 315-amino-acid polypeptide reads, in one-letter code: MTRLPILLLLISLVYATPFPQTSKKIGDDATLSCNRNNTNDYVVMSAWYKEPNSIILLAAKSDVLYFDNYTKDKISYDSPYDDLVTTITIKSLTARDAGTYVCAFFMTSPTNDTDKVDYEEYSTELIVNTDSESTIDIILSGSTHSPETSSEKPDYIDNSNCSSVFEIATPEPITDNVEDHTDTVTYTSDSINTVSATSGESTTDETPEPITDKEEDHTVTDTVSYTTVSTSSGIVTTKSTTDDADLYDTYNDNDTVPSTTVGSSTTSISNYKTKDFVEIFGITALIILSAVAIFCITYYICNKRSRKYKTENKV.

The N-terminal stretch at 1–16 is a signal peptide; it reads MTRLPILLLLISLVYA. An Ig-like V-type domain is found at 17–121; that stretch reads TPFPQTSKKI…NDTDKVDYEE (105 aa). At 17–279 the chain is on the virion surface side; sequence TPFPQTSKKI…SNYKTKDFVE (263 aa). A disulfide bridge links C34 with C103. N-linked (GlcNAc...) asparagine; by host glycans are attached at residues N37, N69, N112, and N161. The segment at 194-213 is disordered; the sequence is TVSATSGESTTDETPEPITD. The N-linked (GlcNAc...) asparagine; by host glycan is linked to N254. The chain crosses the membrane as a helical span at residues 280 to 303; it reads IFGITALIILSAVAIFCITYYICN. The Intravirion portion of the chain corresponds to 304 to 315; the sequence is KRSRKYKTENKV.

Belongs to the orthopoxvirus OPG185 family. Heterodimerizes with OPG040. The heterodimer OPG185-OPG040 interacts with components of the entry fusion complex OPG143 and OPG094. Heterodimer with C3/VPC protein; disulfide-linked. In terms of processing, glycosylated; contains phosphate and sulfate-substituted glycans. O-glycosylation is required for hemagglutination and hemadsorption activities of infected cell membranes.

It is found in the virion membrane. Its subcellular location is the host membrane. Prevents cell to cell fusion by interacting with and directing the viral OPG040 protein on the host plasma membrane. The OPG185-OPG040 complex associates with components of the entry fusion complex (EFC) presumably to avoid superinfection and syncytium formation. Via its interaction with C3/VCP protein, protects the infected cell and probably also the extracellular enveloped virus from complement attack. This is Protein OPG185 (OPG185) from Vaccinia virus (strain Copenhagen) (VACV).